The sequence spans 190 residues: Potassium-transporting ATPase KdpC subunit (190 aa).

The helical transmembrane segment at 10-30 (TFLFLLLITGGVYPLLTTALG) threads the bilayer.

The protein belongs to the KdpC family. As to quaternary structure, the system is composed of three essential subunits: KdpA, KdpB and KdpC.

It is found in the cell inner membrane. Part of the high-affinity ATP-driven potassium transport (or Kdp) system, which catalyzes the hydrolysis of ATP coupled with the electrogenic transport of potassium into the cytoplasm. This subunit acts as a catalytic chaperone that increases the ATP-binding affinity of the ATP-hydrolyzing subunit KdpB by the formation of a transient KdpB/KdpC/ATP ternary complex. The polypeptide is Potassium-transporting ATPase KdpC subunit (Escherichia coli O7:K1 (strain IAI39 / ExPEC)).